Consider the following 253-residue polypeptide: Phosphate import ATP-binding protein PstB (253 aa).

Residues 7 to 249 (ASAKNLNLWY…PQSSKTKRYI (243 aa)) form the ABC transporter domain. 39 to 46 (GPSGCGKS) contributes to the ATP binding site.

The protein belongs to the ABC transporter superfamily. Phosphate importer (TC 3.A.1.7) family. In terms of assembly, the complex is composed of two ATP-binding proteins (PstB), two transmembrane proteins (PstC and PstA) and a solute-binding protein (PstS).

It is found in the cell inner membrane. It catalyses the reaction phosphate(out) + ATP + H2O = ADP + 2 phosphate(in) + H(+). Its function is as follows. Part of the ABC transporter complex PstSACB involved in phosphate import. Responsible for energy coupling to the transport system. The protein is Phosphate import ATP-binding protein PstB of Ehrlichia ruminantium (strain Gardel).